Here is an 86-residue protein sequence, read N- to C-terminus: Toxin CngtIV (86 aa).

A signal peptide spans 1-19 (MNSLLIITACLVLIGTVWA). Residues 20-84 (KDGYLVDVKG…TWPLPNKRCG (65 aa)) enclose the LCN-type CS-alpha/beta domain. Intrachain disulfides connect Cys30–Cys83, Cys34–Cys59, Cys43–Cys64, and Cys47–Cys66.

This sequence belongs to the long (4 C-C) scorpion toxin superfamily. Sodium channel inhibitor family. Beta subfamily. As to expression, expressed by the venom gland.

It localises to the secreted. Beta toxins bind voltage-independently at site-4 of sodium channels (Nav) and shift the voltage of activation toward more negative potentials thereby affecting sodium channel activation and promoting spontaneous and repetitive firing. This chain is Toxin CngtIV, found in Centruroides noxius (Mexican scorpion).